The primary structure comprises 192 residues: uncharacterized protein (192 aa).

This is an uncharacterized protein from Nostoc sp. (strain PCC 7120 / SAG 25.82 / UTEX 2576).